A 932-amino-acid chain; its full sequence is Myelin gene regulatory factor-like A (932 aa).

Low complexity-rich tracts occupy residues 1-19 (MDGYNQQQQQQQQQQQQHQ) and 33-48 (QQQQQQQQQQQQQQQQ). 7 disordered regions span residues 1-63 (MDGY…ISNG), 152-256 (VNSP…LSSS), 269-328 (TNTQ…NENP), 540-568 (VTPPGDLSPVHTPDYAGTSSNNGGGSNNM), 582-601 (TMNIVSPGHSPTSPRPLSQL), 613-660 (TQNH…NNNN), and 680-726 (NINN…CHWN). Over residues 49-59 (PMNGSNNQLLG) the composition is skewed to polar residues. A coiled-coil region spans residues 127-154 (LDSSFLMLQQQLQDQQQQIAQFNSSVNS). Low complexity-rich tracts occupy residues 152 to 249 (VNSP…ANNT) and 277 to 294 (PRSISPNPSPNLSPTNSP). The NDT80 DNA-binding region spans 286–546 (PNLSPTNSPI…ATQVTPPGDL (261 aa)). Residues 311–328 (ENENSDPPSPMTQYNENP) are compositionally biased toward polar residues. Low complexity-rich tracts occupy residues 615–660 (NHNN…NNNN) and 680–721 (NINN…NNNN). Residues 767–877 (SDLRIKYDLK…KQMDEMKLKL (111 aa)) enclose the Peptidase S74 domain. A coiled-coil region spans residues 863-895 (TQELSKQMDEMKLKLITYESKLKNLKKKSKNQT). Residues 895-915 (TILLIIFMITFLLVALYMYKP) traverse the membrane as a helical segment.

It localises to the membrane. Its function is as follows. Transcription factor which acts as a key regulator of pstA (prestalk-A) cells differentiation. Essential for ecmA-specific gene expression. The sequence is that of Myelin gene regulatory factor-like A (mrfA) from Dictyostelium discoideum (Social amoeba).